An 87-amino-acid chain; its full sequence is Large ribosomal subunit protein bL27 (87 aa).

Belongs to the bacterial ribosomal protein bL27 family.

The sequence is that of Large ribosomal subunit protein bL27 from Pseudarthrobacter chlorophenolicus (strain ATCC 700700 / DSM 12829 / CIP 107037 / JCM 12360 / KCTC 9906 / NCIMB 13794 / A6) (Arthrobacter chlorophenolicus).